A 171-amino-acid polypeptide reads, in one-letter code: 3-hydroxydecanoyl-[acyl-carrier-protein] dehydratase (171 aa).

The active site involves His70.

This sequence belongs to the thioester dehydratase family. FabA subfamily. Homodimer.

It is found in the cytoplasm. The catalysed reaction is a (3R)-hydroxyacyl-[ACP] = a (2E)-enoyl-[ACP] + H2O. The enzyme catalyses (3R)-hydroxydecanoyl-[ACP] = (2E)-decenoyl-[ACP] + H2O. It catalyses the reaction (2E)-decenoyl-[ACP] = (3Z)-decenoyl-[ACP]. Its pathway is lipid metabolism; fatty acid biosynthesis. Necessary for the introduction of cis unsaturation into fatty acids. Catalyzes the dehydration of (3R)-3-hydroxydecanoyl-ACP to E-(2)-decenoyl-ACP and then its isomerization to Z-(3)-decenoyl-ACP. Can catalyze the dehydratase reaction for beta-hydroxyacyl-ACPs with saturated chain lengths up to 16:0, being most active on intermediate chain length. This chain is 3-hydroxydecanoyl-[acyl-carrier-protein] dehydratase, found in Xanthomonas campestris pv. campestris (strain 8004).